Reading from the N-terminus, the 176-residue chain is Large ribosomal subunit protein uL10 (176 aa).

The protein belongs to the universal ribosomal protein uL10 family. As to quaternary structure, part of the ribosomal stalk of the 50S ribosomal subunit. The N-terminus interacts with L11 and the large rRNA to form the base of the stalk. The C-terminus forms an elongated spine to which L12 dimers bind in a sequential fashion forming a multimeric L10(L12)X complex.

Functionally, forms part of the ribosomal stalk, playing a central role in the interaction of the ribosome with GTP-bound translation factors. The sequence is that of Large ribosomal subunit protein uL10 from Streptomyces avermitilis (strain ATCC 31267 / DSM 46492 / JCM 5070 / NBRC 14893 / NCIMB 12804 / NRRL 8165 / MA-4680).